Consider the following 65-residue polypeptide: Small ribosomal subunit protein eS27 (65 aa).

Residues cysteine 21, cysteine 24, cysteine 40, and cysteine 43 each contribute to the Zn(2+) site. The C4-type zinc finger occupies 21–43 (CRDCGNVQVVFARPSSTVTCNIC).

Belongs to the eukaryotic ribosomal protein eS27 family. As to quaternary structure, part of the 30S ribosomal subunit. It depends on Zn(2+) as a cofactor.

The protein is Small ribosomal subunit protein eS27 of Thermoplasma acidophilum (strain ATCC 25905 / DSM 1728 / JCM 9062 / NBRC 15155 / AMRC-C165).